We begin with the raw amino-acid sequence, 254 residues long: GTP cyclohydrolase 1 type 2 homolog (254 aa).

A divalent metal cation contacts are provided by H68, H69, D106, H222, and E226.

Belongs to the GTP cyclohydrolase I type 2/NIF3 family. As to quaternary structure, homohexamer.

This Allochromatium vinosum (strain ATCC 17899 / DSM 180 / NBRC 103801 / NCIMB 10441 / D) (Chromatium vinosum) protein is GTP cyclohydrolase 1 type 2 homolog.